Consider the following 412-residue polypeptide: CapZ-interacting protein (412 aa).

Disordered regions lie at residues 1-84 (MEER…KSSP) and 99-412 (ALLP…DTRM). Polar residues predominate over residues 7-20 (ETNSNVDSSAQPSV). 8 positions are modified to phosphoserine: serine 68, serine 82, serine 83, serine 105, serine 108, serine 116, serine 120, and serine 123. A Phosphothreonine modification is found at threonine 124. Phosphoserine is present on residues serine 126, serine 127, serine 135, and serine 143. The segment covering 159–176 (VRTRGSIKRRPPSRRFRR) has biased composition (basic residues). Residues serine 177, serine 179, and serine 216 each carry the phosphoserine modification. Phosphothreonine occurs at positions 243 and 256. Positions 248–258 (EKPEELVRTPE) are enriched in basic and acidic residues. Serine 297 carries the phosphoserine modification. Composition is skewed to basic and acidic residues over residues 298-312 (PREETTPGEHTDTGK) and 319-330 (SEERVADEDRLG). Phosphoserine occurs at positions 333 and 401.

In terms of assembly, interacts with CAPZA2 and CAPZB. Dephosphorylation results in its dissociation from CAPZA2.

Stress-induced phosphorylation of CAPZIP may regulate the ability of F-actin-capping protein to remodel actin filament assembly. The protein is CapZ-interacting protein (Rcsd1) of Mus musculus (Mouse).